The following is a 37-amino-acid chain: Large ribosomal subunit protein bL36 (37 aa).

The protein belongs to the bacterial ribosomal protein bL36 family.

This Pasteurella multocida (strain Pm70) protein is Large ribosomal subunit protein bL36.